Reading from the N-terminus, the 364-residue chain is tRNA 2-selenouridine synthase (364 aa).

The 124-residue stretch at 14-137 (LIADTPIIDV…LRQTAIQATI (124 aa)) folds into the Rhodanese domain. Cysteine 97 acts as the S-selanylcysteine intermediate in catalysis.

The protein belongs to the SelU family. In terms of assembly, monomer.

The enzyme catalyses 5-methylaminomethyl-2-thiouridine(34) in tRNA + selenophosphate + (2E)-geranyl diphosphate + H2O + H(+) = 5-methylaminomethyl-2-selenouridine(34) in tRNA + (2E)-thiogeraniol + phosphate + diphosphate. The catalysed reaction is 5-methylaminomethyl-2-thiouridine(34) in tRNA + (2E)-geranyl diphosphate = 5-methylaminomethyl-S-(2E)-geranyl-thiouridine(34) in tRNA + diphosphate. It carries out the reaction 5-methylaminomethyl-S-(2E)-geranyl-thiouridine(34) in tRNA + selenophosphate + H(+) = 5-methylaminomethyl-2-(Se-phospho)selenouridine(34) in tRNA + (2E)-thiogeraniol. It catalyses the reaction 5-methylaminomethyl-2-(Se-phospho)selenouridine(34) in tRNA + H2O = 5-methylaminomethyl-2-selenouridine(34) in tRNA + phosphate. Involved in the post-transcriptional modification of the uridine at the wobble position (U34) of tRNA(Lys), tRNA(Glu) and tRNA(Gln). Catalyzes the conversion of 2-thiouridine (S2U-RNA) to 2-selenouridine (Se2U-RNA). Acts in a two-step process involving geranylation of 2-thiouridine (S2U) to S-geranyl-2-thiouridine (geS2U) and subsequent selenation of the latter derivative to 2-selenouridine (Se2U) in the tRNA chain. The chain is tRNA 2-selenouridine synthase from Escherichia coli (strain K12 / MC4100 / BW2952).